The sequence spans 183 residues: Putative 3-methyladenine DNA glycosylase (183 aa).

It belongs to the DNA glycosylase MPG family.

The polypeptide is Putative 3-methyladenine DNA glycosylase (Rickettsia rickettsii (strain Iowa)).